The chain runs to 516 residues: Anaerobic nitric oxide reductase transcription regulator NorR (516 aa).

Position 57 is a 4-aspartylphosphate (Asp57). Residues Ile187–Val416 form the Sigma-54 factor interaction domain. ATP is bound by residues Gly215 to Glu222 and Ala278 to Glu287. Residues Trp482–Lys501 constitute a DNA-binding region (H-T-H motif).

The protein operates within nitrogen metabolism; nitric oxide reduction. Its function is as follows. Required for the expression of anaerobic nitric oxide (NO) reductase, acts as a transcriptional activator for at least the norVW operon. Activation also requires sigma-54. This chain is Anaerobic nitric oxide reductase transcription regulator NorR, found in Klebsiella pneumoniae (strain 342).